The sequence spans 383 residues: La protein homolog (383 aa).

Residues 1-43 (MTEVEAKATATEETTKEEEEAPETTAEQTEESAQETSENVSKL) form a disordered region. A compositionally biased stretch (acidic residues) spans 15–33 (TKEEEEAPETTAEQTEESA). Residues 37-129 (SENVSKLEAS…RRHPERPLPE (93 aa)) form the HTH La-type RNA-binding domain. The RRM domain maps to 141-228 (RTVYVKGFAP…RKMQDDYFEE (88 aa)). The xRRM domain maps to 249 to 368 (HLPKGASVHL…RTPEGRQASR (120 aa)). Positions 343–383 (KDQQARRQASNARNKGRTPEGRQASRPPQEWRRKAKGGRGE) are disordered.

The protein localises to the nucleus. It localises to the cytoplasm. Its function is as follows. May be involved in transcription termination by RNA polymerase III. Binds RNA and DNA. Binds to the 3' end of the minus strand of Sindbis virus RNA. This may be significant for Sindbis virus RNA replication. The protein is La protein homolog of Aedes albopictus (Asian tiger mosquito).